An 85-amino-acid polypeptide reads, in one-letter code: Teretoxin Tan9.6 (85 aa).

An N-terminal signal peptide occupies residues 1-21 (MMSKTGALLLTFMILVLFSMA). Residues 22-52 (AADALGERFEDHEQKIREQDAGVGLLSLMGR) constitute a propeptide that is removed on maturation.

Contains 3 disulfide bonds. Expressed by the venom duct.

It is found in the secreted. In Terebra anilis (Auger snail), this protein is Teretoxin Tan9.6.